Reading from the N-terminus, the 97-residue chain is Lipolysis-activating peptide 1-alpha chain (97 aa).

The signal sequence occupies residues 1–21 (MNITLFCSVFILISLAGLSVS). Residues 25–88 (PGNYPMSLYG…FWAAHKNHCK (64 aa)) enclose the LCN-type CS-alpha/beta domain. 3 disulfides stabilise this stretch: Cys-39–Cys-62, Cys-48–Cys-67, and Cys-52–Cys-69.

Belongs to the long (3 C-C) scorpion toxin superfamily. Monomer (edited version) and heterodimer (non-edited version) of this alpha chain and a beta chain (AC D9U2A2). In terms of tissue distribution, expressed by the venom gland.

Its subcellular location is the secreted. Its function is as follows. The heterodimer non-edited LVP1 induces lipolysis in rat adipocytes. Induction of lipolysis by LVP1 appears to be mediated through the beta-2 adrenergic receptor pathway (ADRB2). Functionally, the edited BmKBTx-like, similar to beta-toxins, may modulate voltage-gated sodium channels (Nav) and may block voltage-gated potassium channels (Kv). The polypeptide is Lipolysis-activating peptide 1-alpha chain (Lychas mucronatus (Chinese swimming scorpion)).